The chain runs to 141 residues: Large ribosomal subunit protein uL11 (141 aa).

It belongs to the universal ribosomal protein uL11 family. Part of the ribosomal stalk of the 50S ribosomal subunit. Interacts with L10 and the large rRNA to form the base of the stalk. L10 forms an elongated spine to which L12 dimers bind in a sequential fashion forming a multimeric L10(L12)X complex. One or more lysine residues are methylated.

Its function is as follows. Forms part of the ribosomal stalk which helps the ribosome interact with GTP-bound translation factors. In Picosynechococcus sp. (strain ATCC 27264 / PCC 7002 / PR-6) (Agmenellum quadruplicatum), this protein is Large ribosomal subunit protein uL11.